A 289-amino-acid polypeptide reads, in one-letter code: ATP synthase subunit a (289 aa).

6 helical membrane passes run 43-63 (AFHV…VLIF), 101-121 (SAVI…MNAV), 160-180 (LSVF…GGFI), 193-213 (LFVQ…TLIA), 232-252 (VFIL…GLGV), and 259-279 (AVFH…LTIV).

It belongs to the ATPase A chain family. In terms of assembly, F-type ATPases have 2 components, CF(1) - the catalytic core - and CF(0) - the membrane proton channel. CF(1) has five subunits: alpha(3), beta(3), gamma(1), delta(1), epsilon(1). CF(0) has three main subunits: a(1), b(2) and c(9-12). The alpha and beta chains form an alternating ring which encloses part of the gamma chain. CF(1) is attached to CF(0) by a central stalk formed by the gamma and epsilon chains, while a peripheral stalk is formed by the delta and b chains.

It is found in the cell inner membrane. Its function is as follows. Key component of the proton channel; it plays a direct role in the translocation of protons across the membrane. The polypeptide is ATP synthase subunit a (Pseudomonas savastanoi pv. phaseolicola (strain 1448A / Race 6) (Pseudomonas syringae pv. phaseolicola (strain 1448A / Race 6))).